Reading from the N-terminus, the 412-residue chain is Transcription termination factor 3, mitochondrial (412 aa).

Residues methionine 1–asparagine 67 constitute a mitochondrion transit peptide.

The protein belongs to the mTERF family.

The protein localises to the mitochondrion. Binds promoter DNA and regulates initiation of transcription. Required for normal mitochondrial transcription and translation, and for normal assembly of mitochondrial respiratory complexes. Required for normal mitochondrial function. Maintains 16S rRNA levels and functions in mitochondrial ribosome assembly by regulating the biogenesis of the 39S ribosomal subunit. The chain is Transcription termination factor 3, mitochondrial (Mterf3) from Mus musculus (Mouse).